The sequence spans 357 residues: Arginine kinase Met e 2 (357 aa).

The region spanning 9-91 is the Phosphagen kinase N-terminal domain; the sequence is KLEAGFKKLE…FDPIIEDYHV (83 aa). Residue 64 to 68 participates in L-arginine binding; the sequence is GVGIY. In terms of domain architecture, Phosphagen kinase C-terminal spans 119 to 356; sequence FVISTRVRCG…LELIKIEKEM (238 aa). Residues 122–126 and His185 contribute to the ATP site; that span reads STRVR. Glu225 is an L-arginine binding site. Residue Arg229 coordinates ATP. An L-arginine-binding site is contributed by Cys271. Residues 280 to 284 and 309 to 314 contribute to the ATP site; these read RASVH and RGTRGE. Residue Glu314 coordinates L-arginine.

The protein belongs to the ATP:guanido phosphotransferase family.

It catalyses the reaction L-arginine + ATP = N(omega)-phospho-L-arginine + ADP + H(+). Its function is as follows. Catalyzes the reversible transfer of high energy ATP gamma-phosphate group to L-arginine. The sequence is that of Arginine kinase Met e 2 from Metapenaeus ensis (Greasyback shrimp).